The following is a 515-amino-acid chain: Protein NRT1/ PTR FAMILY 4.1 (515 aa).

12 helical membrane-spanning segments follow: residues 24 to 44 (GIKA…VFLA), 71 to 91 (FVGT…SFLT), 93 to 113 (FAAF…LTLQ), 134 to 154 (VLFT…GSLP), 168 to 188 (LISG…FLAV), 204 to 224 (FTIS…GCPM), 298 to 318 (FLAL…VAQM), 339 to 359 (IPVA…LALY), 381 to 401 (IGYG…VEVK), 413 to 433 (ISVF…MLTV), 461 to 481 (AMGF…TGWL), and 492 to 512 (LFYL…IFWA).

This sequence belongs to the major facilitator superfamily. Proton-dependent oligopeptide transporter (POT/PTR) (TC 2.A.17) family. In terms of tissue distribution, expressed in siliques and flowers.

It localises to the membrane. Involved in (+) and (-)-abscisic acid transport (ABA) and in gibberellin import. The protein is Protein NRT1/ PTR FAMILY 4.1 (NPF4.1) of Arabidopsis thaliana (Mouse-ear cress).